Reading from the N-terminus, the 550-residue chain is Genetic interactor of prohibitins 3, mitochondrial (550 aa).

Residues 1–43 (MKSRLQAFKQFTRFVSCKSCGVELQSKNPSVTGYYKPPRAVRK) constitute a mitochondrion transit peptide. The CP-type G domain occupies 107–298 (IHSFNDIKGA…VNDLPGYTMD (192 aa)).

It belongs to the TRAFAC class YlqF/YawG GTPase family. GEP3 subfamily.

The protein localises to the mitochondrion. In terms of biological role, may be involved in the mitochondrial lipid metabolism. This is Genetic interactor of prohibitins 3, mitochondrial (GEP3) from Kluyveromyces lactis (strain ATCC 8585 / CBS 2359 / DSM 70799 / NBRC 1267 / NRRL Y-1140 / WM37) (Yeast).